Here is a 339-residue protein sequence, read N- to C-terminus: Caspase drICE (339 aa).

Positions M1 to D28 are excised as a propeptide. Residues M1–A45 are disordered. Active-site residues include H169 and C211. The propeptide occupies G218–D230.

This sequence belongs to the peptidase C14A family. Heterotetramer that consists of two anti-parallel arranged heterodimers, each one formed by a 21 kDa (p21) and a 12 kDa (p12) subunit. Inactive pro-form can homodimerize. Dronc and Drice can form a stable complex. Interacts with Diap2 (via BIR3 domain) to form a stable complex. May interact with some isoforms of Dark.

Its activity is regulated as follows. Zymogen activated by proteolytic cleavage; cleaved by the initiator caspase Dronc upon apoptosis induction. Its function is as follows. Involved in the activation cascade of caspases responsible for apoptosis execution. Acts downstream of rpr. Cleaves baculovirus p35 and lamin DmO in vitro. The sequence is that of Caspase drICE (Drice) from Drosophila melanogaster (Fruit fly).